The chain runs to 113 residues: U11-theraphotoxin-Hhn1a (113 aa).

An N-terminal signal peptide occupies residues 1–21 (MNTVRVAFLLVFVLAVSLGQA). The propeptide occupies 22 to 74 (DKDENRMEMQEKTEQGKSYLDFAENLLLQKLEELEAKLLEEDSEESRNSRQKR). Residues 61-83 (EEDSEESRNSRQKRCIGEGVPCD) are disordered. 3 cysteine pairs are disulfide-bonded: cysteine 75-cysteine 90, cysteine 82-cysteine 95, and cysteine 89-cysteine 110.

This sequence belongs to the neurotoxin 14 (magi-1) family. 01 (HNTX-16) subfamily. As to expression, expressed by the venom gland.

The protein resides in the secreted. Functionally, probable ion channel inhibitor. The sequence is that of U11-theraphotoxin-Hhn1a from Cyriopagopus hainanus (Chinese bird spider).